A 219-amino-acid polypeptide reads, in one-letter code: MEAARDYAGALIRPLTFMGSQTKRVLFTPLMHPARPFRVSNHDRSSRRGVMASSLQELISKTLDALVIATGLVTLVLEEDGTVVDTEEFFQTLGDNTHFMILEKGQKWMPGSQHVPTCSPPKRSGIARVTFDLYRLNPKDFIGCLNVKATMYEMYSVSYDIRCTGLKGLLRSLLRFLSYSAQVTGQFLIYLGTYMLRVLDDKEERPSLRSQAKGRFTCG.

The CIDE-N domain maps to 33-110 (PARPFRVSNH…ILEKGQKWMP (78 aa)). The tract at residues 163 to 180 (CTGLKGLLRSLLRFLSYS) is amphipathic helix.

It belongs to the CIDE family. Homodimer. Interacts with CIDEC. Directly interacts with CEBPB. Interacts with isoform CLSTN3beta of CLSTN3; inhibiting the lipid transferase activity of CIDEA. In terms of tissue distribution, expressed in omental and subcutaneous adipose tissue (at protein level).

Its subcellular location is the lipid droplet. It is found in the nucleus. The enzyme catalyses a triacyl-sn-glycerol(in) = a triacyl-sn-glycerol(out). In terms of biological role, lipid transferase that promotes unilocular lipid droplet formation by mediating lipid droplet fusion. Lipid droplet fusion promotes their enlargement, restricting lipolysis and favoring lipid storage. Localizes on the lipid droplet surface, at focal contact sites between lipid droplets, and mediates atypical lipid droplet fusion by promoting directional net neutral lipid transfer from the smaller to larger lipid droplets. The transfer direction may be driven by the internal pressure difference between the contacting lipid droplet pair and occurs at a lower rate than that promoted by CIDEC. May also act as a CEBPB coactivator in epithelial cells to control the expression of a subset of CEBPB downstream target genes, including ID2, IGF1, PRLR, SOCS1, SOCS3, XDH, but not casein. By interacting with CEBPB, strengthens the association of CEBPB with the XDH promoter, increases histone acetylation and dissociates HDAC1 from the promoter. When overexpressed, induces apoptosis; the physiological significance of its role in apoptosis is unclear. The polypeptide is Lipid transferase CIDEA (Homo sapiens (Human)).